A 623-amino-acid chain; its full sequence is Chaperone protein DnaK (623 aa).

Residue Thr-197 is modified to Phosphothreonine; by autocatalysis. Over residues 595-615 (AENMYKKDEPNTANDKKKKDD) the composition is skewed to basic and acidic residues. Residues 595–623 (AENMYKKDEPNTANDKKKKDDDVIDAEVE) are disordered.

The protein belongs to the heat shock protein 70 family.

Functionally, acts as a chaperone. The sequence is that of Chaperone protein DnaK from Campylobacter jejuni subsp. doylei (strain ATCC BAA-1458 / RM4099 / 269.97).